A 399-amino-acid polypeptide reads, in one-letter code: Phospholipase C (399 aa).

Positions 1-28 are cleaved as a signal peptide; sequence MNKKKILKFICSAVLSFTLFSGYKSYAW. Zn(2+) is bound by residues Trp28, His38, Asp83, His95, His153, Asp157, His163, His175, and Glu179. In terms of domain architecture, Zn-dependent PLC spans 29-277; sequence DGKVDGTGTH…NEVSGTINTT (249 aa). The segment at 275–282 is linker; the sequence is NTTENSKI. The 117-residue stretch at 283-399 folds into the PLAT domain; sequence NEIMVVIKTA…DNKTFYINNK (117 aa). Positions 298, 299, 300, 320, 321, 323, 324, 325, and 363 each coordinate Ca(2+).

This sequence belongs to the bacterial zinc-metallophospholipase C family. Ca(2+) is required as a cofactor. The cofactor is Zn(2+).

The protein resides in the secreted. It catalyses the reaction a 1,2-diacyl-sn-glycero-3-phosphocholine + H2O = phosphocholine + a 1,2-diacyl-sn-glycerol + H(+). Bacterial hemolysins are exotoxins that attack blood cell membranes and cause cell rupture. Binds to eukaryotic membranes where it hydrolyzes phosphatidylcholine, sphingomyelin and phosphatidylethanolamine. The diacylglycerol produced can activate both the arachidonic acid pathway, leading to modulation of the inflammatory response cascade and thrombosis, and protein kinase C, leading to activation of eukaryotic phospholipases and further membrane damage. This Clostridium haemolyticum protein is Phospholipase C (plc).